The chain runs to 343 residues: Protein phosphatase 2C homolog 7, mitochondrial (343 aa).

A mitochondrion-targeting transit peptide spans 1 to 39 (MFANVGFRTLRVSRGPLYGSCSQIISFSKRTFYSSAKSG). The region spanning 76–342 (IYQKLKDSIR…DDITVVVVRV (267 aa)) is the PPM-type phosphatase domain. The Mn(2+) site is built by aspartate 109, glycine 110, and aspartate 265.

Requires Mg(2+) as cofactor. The cofactor is Mn(2+).

The protein localises to the mitochondrion. It carries out the reaction O-phospho-L-seryl-[protein] + H2O = L-seryl-[protein] + phosphate. The enzyme catalyses O-phospho-L-threonyl-[protein] + H2O = L-threonyl-[protein] + phosphate. Its function is as follows. Protein phosphatase which positively regulates biosynthesis of the ubiquinone, coenzyme Q. Dephosphorylates and activates the ubiquinone biosynthesis protein CAT5/COQ7. Also dephosphorylates CIT1 on 'Ser-462', which leads to its activation. This Saccharomyces cerevisiae (strain ATCC 204508 / S288c) (Baker's yeast) protein is Protein phosphatase 2C homolog 7, mitochondrial (PTC7).